A 75-amino-acid chain; its full sequence is Dermaseptin-SP3 (75 aa).

The N-terminal stretch at 1–22 (MAFLKKSLFLVLFLGLVSLSMC) is a signal peptide. A propeptide spanning residues 23–45 (EEEKRENEVEEEQEDDEQSELRR) is cleaved from the precursor. Pro72 bears the Proline amide mark. The propeptide occupies 74 to 75 (EQ).

The protein belongs to the frog skin active peptide (FSAP) family. Dermaseptin subfamily. Expressed by the skin glands.

It localises to the secreted. The protein resides in the target cell membrane. Its function is as follows. Antimicrobial peptide with activity against Gram-positive and Gram-negative bacteria and fungi. Has been tested against E.coli (MIC=47.50-128 uM), S.aureus (MIC=189.98-512 uM), K.pneumoniae (MIC&gt;189.98 uM) and C.albicans (MIC&gt;189.98 uM). Probably acts by disturbing membrane functions with its alpha-helical amphipathic structure. May penetrate bacterial membranes, but stay at the mammalian membrane surface. Shows a very weak hemolytic activity. This Agalychnis spurrelli (Gliding leaf frog) protein is Dermaseptin-SP3.